We begin with the raw amino-acid sequence, 135 residues long: UPF0306 protein C8J_1355 (135 aa).

Belongs to the UPF0306 family.

The protein is UPF0306 protein C8J_1355 of Campylobacter jejuni subsp. jejuni serotype O:6 (strain 81116 / NCTC 11828).